The sequence spans 587 residues: Succinate dehydrogenase flavoprotein subunit (587 aa).

FAD-binding positions include 15 to 20, 39 to 54, and Asp-223; these read GAGGAG and SKVF…AQGG. His-47 carries the tele-8alpha-FAD histidine modification. His-244 and Thr-256 together coordinate substrate. Arg-288 functions as the Proton acceptor in the catalytic mechanism. Residue His-355 participates in substrate binding. FAD is bound at residue Glu-389. Arg-400 serves as a coordination point for substrate. Position 405–406 (405–406) interacts with FAD; sequence SL.

It belongs to the FAD-dependent oxidoreductase 2 family. FRD/SDH subfamily. Part of an enzyme complex containing four subunits: a flavoprotein, an iron-sulfur protein, cytochrome b-556 and a hydrophobic protein. The cofactor is FAD.

Its subcellular location is the cell inner membrane. It carries out the reaction a quinone + succinate = fumarate + a quinol. Its pathway is carbohydrate metabolism; tricarboxylic acid cycle; fumarate from succinate (bacterial route): step 1/1. This is Succinate dehydrogenase flavoprotein subunit (sdhA) from Coxiella burnetii (strain RSA 493 / Nine Mile phase I).